Reading from the N-terminus, the 274-residue chain is Beta-lactamase OXA-9 (274 aa).

A signal peptide spans 1–24 (MKKILLLHMLVFVSATLPISSVAS). S58 serves as the catalytic Acyl-ester intermediate. The residue at position 61 (K61) is an N6-carboxylysine. 206–208 (KSG) contributes to the substrate binding site.

This sequence belongs to the class-D beta-lactamase family.

It catalyses the reaction a beta-lactam + H2O = a substituted beta-amino acid. Oxacillin-hydrolyzing beta-lactamase. Confers resistance to beta-lactam antibiotics but at a significantly lower level than the TEM bla gene product. This Klebsiella aerogenes (Enterobacter aerogenes) protein is Beta-lactamase OXA-9 (bla).